A 441-amino-acid polypeptide reads, in one-letter code: Probable indole-3-acetic acid-amido synthetase GH3.9 (441 aa).

The protein belongs to the IAA-amido conjugating enzyme family. Expressed in etiolated seedlings and roots.

In terms of biological role, may catalyze the synthesis of indole-3-acetic acid (IAA)-amino acid conjugates, providing a mechanism for the plant to cope with the presence of excess auxin. This Oryza sativa subsp. japonica (Rice) protein is Probable indole-3-acetic acid-amido synthetase GH3.9 (GH3.9).